The primary structure comprises 92 residues: Small integral membrane protein 12 (92 aa).

The helical transmembrane segment at 15 to 34 threads the bilayer; that stretch reads YVTFPVAFVVGAVGYHLEWF.

Belongs to the SMIM12 family.

It localises to the membrane. The chain is Small integral membrane protein 12 (SMIM12) from Nomascus leucogenys (Northern white-cheeked gibbon).